The chain runs to 271 residues: MPELPEVETVRRGIEPHLVGRQIHTVIVRESRLRWPIPLSLTQNLIGQSFLAVGRRGKYLLLSCTQGTIILHLGMSGSLRLVTTNTPHGKHDHLDIVLNNGRCLRFNDPRRFGSVSWTQANPLHHPLLEILGPEPLESLFDGHYLFKHSRHRRTSVKAFIMNHRIVAGVGNIYANEALFLAGIHPRRSASRIGLARYQRLAETTKTVLYNAIQAGGTTLRNFLTSDGKPGYFANQLQIYGRSAHPCPICGTPIRLERIGQRASYYCTQCQH.

Catalysis depends on P2, which acts as the Schiff-base intermediate with DNA. E3 serves as the catalytic Proton donor. Catalysis depends on K58, which acts as the Proton donor; for beta-elimination activity. The DNA site is built by H91, R110, and R152. The FPG-type zinc finger occupies Q237–H271. The active-site Proton donor; for delta-elimination activity is the R261.

Belongs to the FPG family. As to quaternary structure, monomer. It depends on Zn(2+) as a cofactor.

The enzyme catalyses Hydrolysis of DNA containing ring-opened 7-methylguanine residues, releasing 2,6-diamino-4-hydroxy-5-(N-methyl)formamidopyrimidine.. The catalysed reaction is 2'-deoxyribonucleotide-(2'-deoxyribose 5'-phosphate)-2'-deoxyribonucleotide-DNA = a 3'-end 2'-deoxyribonucleotide-(2,3-dehydro-2,3-deoxyribose 5'-phosphate)-DNA + a 5'-end 5'-phospho-2'-deoxyribonucleoside-DNA + H(+). Its function is as follows. Involved in base excision repair of DNA damaged by oxidation or by mutagenic agents. Acts as a DNA glycosylase that recognizes and removes damaged bases. Has a preference for oxidized purines, such as 7,8-dihydro-8-oxoguanine (8-oxoG). Has AP (apurinic/apyrimidinic) lyase activity and introduces nicks in the DNA strand. Cleaves the DNA backbone by beta-delta elimination to generate a single-strand break at the site of the removed base with both 3'- and 5'-phosphates. The chain is Formamidopyrimidine-DNA glycosylase from Nitrosococcus oceani (strain ATCC 19707 / BCRC 17464 / JCM 30415 / NCIMB 11848 / C-107).